The primary structure comprises 323 residues: tRNA U34 carboxymethyltransferase (323 aa).

Carboxy-S-adenosyl-L-methionine contacts are provided by residues Lys91, Trp105, Lys110, Gly130, 152-154 (DPT), 181-182 (IE), Met196, Tyr200, and Arg315.

Belongs to the class I-like SAM-binding methyltransferase superfamily. CmoB family. As to quaternary structure, homotetramer.

The catalysed reaction is carboxy-S-adenosyl-L-methionine + 5-hydroxyuridine(34) in tRNA = 5-carboxymethoxyuridine(34) in tRNA + S-adenosyl-L-homocysteine + H(+). Functionally, catalyzes carboxymethyl transfer from carboxy-S-adenosyl-L-methionine (Cx-SAM) to 5-hydroxyuridine (ho5U) to form 5-carboxymethoxyuridine (cmo5U) at position 34 in tRNAs. In Escherichia coli O157:H7, this protein is tRNA U34 carboxymethyltransferase.